The primary structure comprises 242 residues: Probable inactive serine protease 58 (242 aa).

The first 17 residues, 1-17, serve as a signal peptide directing secretion; the sequence is MNLILLWALLNLPVALT. The 223-residue stretch at 18–240 folds into the Peptidase S1 domain; sequence FDPNYKDDIT…YIPWIENTIQ (223 aa). 4 disulfide bridges follow: Cys41/Cys57, Cys134/Cys202, Cys166/Cys181, and Cys192/Cys216. Asn157 carries an N-linked (GlcNAc...) asparagine glycan.

It belongs to the peptidase S1 family.

The protein localises to the secreted. The polypeptide is Probable inactive serine protease 58 (PRSS58) (Bos taurus (Bovine)).